Reading from the N-terminus, the 372-residue chain is Alanine racemase (372 aa).

The active-site Proton acceptor; specific for D-alanine is lysine 33. At lysine 33 the chain carries N6-(pyridoxal phosphate)lysine. Arginine 131 contacts substrate. The Proton acceptor; specific for L-alanine role is filled by tyrosine 261. Position 309 (methionine 309) interacts with substrate.

Belongs to the alanine racemase family. It depends on pyridoxal 5'-phosphate as a cofactor.

The catalysed reaction is L-alanine = D-alanine. Its pathway is amino-acid biosynthesis; D-alanine biosynthesis; D-alanine from L-alanine: step 1/1. Functionally, catalyzes the interconversion of L-alanine and D-alanine. May also act on other amino acids. The protein is Alanine racemase (alr) of Salinispora tropica (strain ATCC BAA-916 / DSM 44818 / JCM 13857 / NBRC 105044 / CNB-440).